Here is a 364-residue protein sequence, read N- to C-terminus: BOLA class I histocompatibility antigen, alpha chain BL3-7 (364 aa).

The N-terminal stretch at Met-1–Ala-27 is a signal peptide. The alpha-1 stretch occupies residues Gly-28–Thr-117. The Extracellular portion of the chain corresponds to Gly-28–Ile-310. A glycan (N-linked (GlcNAc...) asparagine) is linked at Asn-113. The segment at Gly-118–Ala-209 is alpha-2. 2 disulfide bridges follow: Cys-128-Cys-191 and Cys-230-Cys-286. The tract at residues Asp-210–Trp-301 is alpha-3. An Ig-like C1-type domain is found at Pro-212–Thr-298. The interval Glu-302–Ile-310 is connecting peptide. A helical transmembrane segment spans residues Met-311–Trp-331. Over Arg-332–Val-364 the chain is Cytoplasmic. Phosphoserine is present on residues Ser-355 and Ser-358.

It belongs to the MHC class I family. In terms of assembly, heterodimer of an alpha chain and a beta chain (beta-2-microglobulin).

The protein localises to the membrane. Involved in the presentation of foreign antigens to the immune system. The chain is BOLA class I histocompatibility antigen, alpha chain BL3-7 from Bos taurus (Bovine).